The sequence spans 359 residues: MLPPDILQNGEFETIYFQTNPTYIKSPIHIPKSTIGKPDTVKIRHFFALLHQDLVVLGLEVFVYLQIYSDFVEKYVYVSKCDTVGLEKSTIKIGKVIGPVLQYIINYNGYKIKMKNLDEKSKDLSDPSTLVRLQRLRDKLPDIYPNLPYYNDIPPKEECIEYRTLPKTQNLRLCVFTKPAKEYLFPNSAKNPYKNLLNGQSLLRWWISIIDSITKGWNNHKLMIPGADKYATRKFIEKYSDWSEGHIFKKDGLAVQAIPLFPDDPKGRFLELVIVECRYGKMTVSRFYQELAYRQEFLLGDCVSLIGCCKENLEVTYHDDSVSTVTISEYKEFMNSLKSVDFSDRVEVSNFVSNYRKSK.

The 359-residue stretch at 1–359 folds into the Rtt109-type HAT domain; sequence MLPPDILQNG…NFVSNYRKSK (359 aa). Residues Phe-176, Ala-180, 195–197, and Trp-205 each bind acetyl-CoA; that span reads NLL. The active-site Proton donor/acceptor is the Asp-264. The residue at position 266 (Lys-266) is an N6-acetyllysine; by autocatalysis.

It belongs to the RTT109 family.

Its subcellular location is the nucleus. It catalyses the reaction L-lysyl-[histone] + acetyl-CoA = N(6)-acetyl-L-lysyl-[histone] + CoA + H(+). Its function is as follows. Histone chaperone-dependent acetylase that modifies 'Lys-56' of histone H3 (H3K56ac), to promote genomic stability, DNA repair and transcriptional regulation during mitotic S-phase. Plays an important role in the regulation of white-opaque genotoxin induced-switching. The polypeptide is Histone acetyltransferase RTT109 (RTT109) (Candida albicans (strain SC5314 / ATCC MYA-2876) (Yeast)).